Consider the following 137-residue polypeptide: Nucleoside diphosphate kinase (137 aa).

The ATP site is built by lysine 10, phenylalanine 58, arginine 86, threonine 92, arginine 103, and asparagine 113. Residue histidine 116 is the Pros-phosphohistidine intermediate of the active site.

It belongs to the NDK family. Homotetramer. Requires Mg(2+) as cofactor.

The protein resides in the cytoplasm. It catalyses the reaction a 2'-deoxyribonucleoside 5'-diphosphate + ATP = a 2'-deoxyribonucleoside 5'-triphosphate + ADP. The enzyme catalyses a ribonucleoside 5'-diphosphate + ATP = a ribonucleoside 5'-triphosphate + ADP. In terms of biological role, major role in the synthesis of nucleoside triphosphates other than ATP. The ATP gamma phosphate is transferred to the NDP beta phosphate via a ping-pong mechanism, using a phosphorylated active-site intermediate. This chain is Nucleoside diphosphate kinase, found in Helicobacter pylori (strain ATCC 700392 / 26695) (Campylobacter pylori).